The sequence spans 827 residues: Valine--tRNA ligase (827 aa).

The 'HIGH' region signature appears at 41–51 (PNVTGQLHLGH). The 'KMSKS' region motif lies at 511 to 515 (KMTKS). Lysine 514 is an ATP binding site. A coiled-coil region spans residues 765–827 (ENLSKEKAQK…KELLDEKIIE (63 aa)).

Belongs to the class-I aminoacyl-tRNA synthetase family. ValS type 1 subfamily. In terms of assembly, monomer.

Its subcellular location is the cytoplasm. It carries out the reaction tRNA(Val) + L-valine + ATP = L-valyl-tRNA(Val) + AMP + diphosphate. Functionally, catalyzes the attachment of valine to tRNA(Val). As ValRS can inadvertently accommodate and process structurally similar amino acids such as threonine, to avoid such errors, it has a 'posttransfer' editing activity that hydrolyzes mischarged Thr-tRNA(Val) in a tRNA-dependent manner. The protein is Valine--tRNA ligase of Mycoplasmopsis pulmonis (strain UAB CTIP) (Mycoplasma pulmonis).